The following is a 447-amino-acid chain: UPF0210 protein Lreu_0940 (447 aa).

It belongs to the UPF0210 family. In terms of assembly, homodimer.

The chain is UPF0210 protein Lreu_0940 from Limosilactobacillus reuteri (strain DSM 20016) (Lactobacillus reuteri).